The following is a 158-amino-acid chain: MGEIGFTEKQEALVKESWEILKQDIPKYSLHFFSQILEIAPAAKGLFSFLRDSDEVPHNNPKLKAHAVKVFKMTCETAIQLREEGKVVVADTTLQYLGSIHLKSGVIDPHFEVVKEALLRTLKEGLGEKYNEEVEGAWSQAYDHLALAIKTEMKQEES.

Positions 5–154 (GFTEKQEALV…LALAIKTEMK (150 aa)) constitute a Globin domain. The Homodimerization motif lies at 38-42 (EIAPA). The heme b site is built by Ser48, Lys62, His66, and His101. The Homodimerization motif lies at 108-120 (DPHFEVVKEALLR).

The protein belongs to the plant globin family. As to quaternary structure, unable to dimerize. The cofactor is heme b. As to expression, expressed in rosette leaves but not in roots.

The protein localises to the cytoplasm. The protein resides in the nucleus. The catalysed reaction is Fe(III)-heme b-[protein] + nitric oxide + H2O = Fe(II)-heme b-[protein] + nitrite + 2 H(+). Phytoglobin that reduces nitrite to nitric oxide (NO) under anoxic conditions (e.g. during flooding or in waterlogged soil). May not function as an oxygen storage or transport protein. Has an unusually high affinity for O(2) through an hexacoordinate heme iron because of a very low dissociation constant. The sequence is that of Anaerobic nitrite reductase AHB2 from Arabidopsis thaliana (Mouse-ear cress).